A 222-amino-acid chain; its full sequence is N-(5'-phosphoribosyl)anthranilate isomerase (222 aa).

This sequence belongs to the TrpF family.

It carries out the reaction N-(5-phospho-beta-D-ribosyl)anthranilate = 1-(2-carboxyphenylamino)-1-deoxy-D-ribulose 5-phosphate. The protein operates within amino-acid biosynthesis; L-tryptophan biosynthesis; L-tryptophan from chorismate: step 3/5. The protein is N-(5'-phosphoribosyl)anthranilate isomerase of Gloeobacter violaceus (strain ATCC 29082 / PCC 7421).